A 214-amino-acid polypeptide reads, in one-letter code: MSGLVALCRARASASSSLFNSVIRPAFRNFSTGFADTQNKSLVAQMKEEMLHMDINSMIGSSMPLGMMRIGTIIHNIEMNPGQGAKMVRAAGTNAKILKEPAKGKCLIKLPSGDTKWINAKCRATIGTVSNPSHGTKKLYKAGQSRWLGIRPKVRGVAMNPCDHPHGGGEGKSKSSGSRGRTSVSPWGKPCKGGYKSASVKKKKKRLAEAAAKM.

Residues 1-30 (MSGLVALCRARASASSSLFNSVIRPAFRNF) constitute a mitochondrion transit peptide. The segment at 157–214 (VAMNPCDHPHGGGEGKSKSSGSRGRTSVSPWGKPCKGGYKSASVKKKKKRLAEAAAKM) is disordered. Positions 163–173 (DHPHGGGEGKS) are enriched in basic and acidic residues. Positions 174 to 185 (KSSGSRGRTSVS) are enriched in low complexity.

Belongs to the universal ribosomal protein uL2 family. Component of the mitochondrial ribosome large subunit.

The protein resides in the mitochondrion. In Arabidopsis thaliana (Mouse-ear cress), this protein is Large ribosomal subunit protein uL2my, C-terminal part.